The primary structure comprises 475 residues: MEIOTIC F-BOX protein MOF (475 aa).

The interval 1–58 (MRRERDATQIPENPMEGIPQTAAAAAAAAAAEASEPPRKRARVDGGGGGAGEEEEDRL) is disordered. Positions 22–33 (AAAAAAAAAAEA) are enriched in low complexity. The 37-residue stretch at 55–91 (EDRLSDLPDCLLEDILAHLGSRQAVQTSVLSRRWRNL) folds into the F-box domain.

The protein belongs to the F-box protein family. FBX subfamily. Part of a SCF (SKP1-CUL1-F-box protein) E3 ubiquitin-protein ligase complex. Interacts (via F-box domain) directly with SKP1. In terms of tissue distribution, highly expressed in the stem, leaf and in the anther during meiosis. Weakly expressed in roots and lemma/palea.

It localises to the nucleus. The protein resides in the chromosome. It functions in the pathway protein modification; protein ubiquitination. Probable component of a SCF (SKP1-CULLIN-F-box protein) E3 ubiquitin-protein ligase complex and may function through the ubiquitin-mediated protein degradation or signaling pathway. Required for male meiotic prophase I progression. Required for telomere bouquet formation, homologous chromosome pairing and for the formation of the synaptonemal complex (SC), which stabilizes initial chromosomal axial associations and promotes crossover formation. Involved in meiotic DNA double-strand break (DSB) end-processing and repair, and is important in the recruitment of DSB repair proteins to the DSB sites. In Oryza sativa subsp. japonica (Rice), this protein is MEIOTIC F-BOX protein MOF.